The chain runs to 505 residues: Gap junction alpha-10 protein (505 aa).

Topologically, residues 1 to 16 (MGDWNLLGGILEEVHS) are cytoplasmic. The chain crosses the membrane as a helical span at residues 17–37 (HSTIVGKIWLTILFIFRMLVL). The Extracellular portion of the chain corresponds to 38 to 76 (GVAAEDVWDDEQSAFACNTQQPGCNNICYDDAFPISLIR). The chain crosses the membrane as a helical span at residues 77 to 97 (FWVLQIIFVSSPSLVYMGHAL). The Cytoplasmic segment spans residues 98 to 165 (YRLRDFEKQR…TYVLHILTRS (68 aa)). The chain crosses the membrane as a helical span at residues 166 to 186 (VLEVGFMIGQYILYGFQMHPI). Topologically, residues 187–209 (YKCTQAPCPNSVDCFVSRPTEKT) are extracellular. Residues 210–230 (IFMLFMHSIAAISLLLNILEI) traverse the membrane as a helical segment. Residues 231-505 (FHLGIRKIMR…IIHETYVYVY (275 aa)) lie on the Cytoplasmic side of the membrane. Over residues 371–383 (TMTASQHRPSSAL) the composition is skewed to polar residues. Positions 371 to 491 (TMTASQHRPS…SKSSHVDSPP (121 aa)) are disordered. Basic and acidic residues predominate over residues 437-446 (MSEKGQRHSD). Positions 447-460 (SGSSRSLNSSCLDF) are enriched in low complexity.

Belongs to the connexin family. Alpha-type (group II) subfamily. As to quaternary structure, a connexon is composed of a hexamer of connexins. Low levels were detected in skin, heart, kidney, testis, ovary, intestine. Expression not detected in brain, sciatic nerve or liver. According to PubMed:15147297 expression is detected only in horizontal cells in the inner nuclear layer of the retina and not in other neurons of the central nervous system or tissues. Detected in the outer plexiform layer of the retina (at protein level).

It localises to the cell membrane. The protein localises to the cell junction. Its subcellular location is the gap junction. Its function is as follows. One gap junction consists of a cluster of closely packed pairs of transmembrane channels, the connexons, through which materials of low MW diffuse from one cell to a neighboring cell. Involved in tracer coupling between horizontal cells of the retina. May play a role in the regulation of horizontal cell patterning. This chain is Gap junction alpha-10 protein (Gja10), found in Mus musculus (Mouse).